The primary structure comprises 446 residues: Pre-rRNA-processing protein crb3/ipi3 (446 aa).

WD repeat units lie at residues 74 to 113 (ILPE…LIYF), 116 to 155 (AHYQ…DQNS), 172 to 214 (GHKR…LLTT), 216 to 257 (ALPS…SNNV), and 294 to 333 (SCQS…VLRR).

It belongs to the WD repeat IPI3/WDR18 family. In terms of assembly, component of the RIX1 complex, composed of ipi1, rix1/ipi2 and crb3/ipi3 in a 1:2:2 stoichiometry. The complex interacts (via rix1) with mdn1 (via its hexameric AAA ATPase ring) and the pre-60S ribosome particles. Interacts with rix1, gcr3 and Las1.

It localises to the nucleus. The protein localises to the chromosome. Required for both pre-rRNA processing and heterochromatic gene silencing. In terms of biological role, component of the RIX1 complex required for processing of ITS2 sequences from 35S pre-rRNA. The chain is Pre-rRNA-processing protein crb3/ipi3 (crb3) from Schizosaccharomyces pombe (strain 972 / ATCC 24843) (Fission yeast).